The primary structure comprises 449 residues: Trigger factor (449 aa).

The PPIase FKBP-type domain maps to 174 to 261 (GDIAVVGFKG…LKDLKTRELP (88 aa)). Residues 430-449 (ENSTVTEKAPDKDKPSVTDA) form a disordered region. The segment covering 437–449 (KAPDKDKPSVTDA) has biased composition (basic and acidic residues).

The protein belongs to the FKBP-type PPIase family. Tig subfamily.

Its subcellular location is the cytoplasm. It catalyses the reaction [protein]-peptidylproline (omega=180) = [protein]-peptidylproline (omega=0). Involved in protein export. Acts as a chaperone by maintaining the newly synthesized protein in an open conformation. Functions as a peptidyl-prolyl cis-trans isomerase. The sequence is that of Trigger factor from Synechococcus sp. (strain CC9311).